The chain runs to 328 residues: MSNTKHIHKGLQERLLDLLLIALIVYMTLKGGTSGACAACKYQRRRCAADCPLAPYFPAEQPKLFQNVHRLFGVRSIVKILEKLDETQKPEAMKSIIFQSYVRDRSPVHGCLGVTQQLQYMIWFAEEELKAVNSQLQLYRSQPQNGQNQNQNHNHNQMIHELGSDHNKQQEDVTSQQLDLGMGLNVNNNQSNVVTPFFSSLLPVSETQQPQMSYTYSCSEVNNNGYSPPAYNTDSGKEILTNNNNVWGDQNRFLYNNNNGGGYSNQNESCHEMKSNGVMAIQSQLVNLQMVSNHQRVEEEEADHEYDELHQFLDIIDDRQSFGDSKEA.

The region spanning 35 to 136 is the LOB domain; the sequence is GACAACKYQR…EELKAVNSQL (102 aa).

This sequence belongs to the LOB domain-containing protein family.

This is LOB domain-containing protein 27 (LBD27) from Arabidopsis thaliana (Mouse-ear cress).